The following is a 259-amino-acid chain: Haloacid dehalogenase-like hydrolase domain-containing protein 2 (259 aa).

Mg(2+) contacts are provided by Asp13 and Ser15. Substrate-binding positions include Asp13 to Ser15 and Thr46 to Asn47. Residues Asn47–Glu71 are a coiled coil. N6-succinyllysine is present on Lys50. Lys179 is a binding site for substrate. Asp204 serves as a coordination point for Mg(2+).

Belongs to the HAD-like hydrolase superfamily. It depends on Mg(2+) as a cofactor.

The polypeptide is Haloacid dehalogenase-like hydrolase domain-containing protein 2 (HDHD2) (Pongo abelii (Sumatran orangutan)).